The following is a 401-amino-acid chain: 4-hydroxy-3-methylbut-2-enyl diphosphate reductase (401 aa).

Residue C66 coordinates [4Fe-4S] cluster. Residue H96 participates in (2E)-4-hydroxy-3-methylbut-2-enyl diphosphate binding. H96 is a binding site for dimethylallyl diphosphate. H96 serves as a coordination point for isopentenyl diphosphate. C157 contributes to the [4Fe-4S] cluster binding site. H185 provides a ligand contact to (2E)-4-hydroxy-3-methylbut-2-enyl diphosphate. Dimethylallyl diphosphate is bound at residue H185. H185 contributes to the isopentenyl diphosphate binding site. Catalysis depends on E187, which acts as the Proton donor. A (2E)-4-hydroxy-3-methylbut-2-enyl diphosphate-binding site is contributed by T250. Residue C288 coordinates [4Fe-4S] cluster. Residues S317, S318, N319, and S381 each contribute to the (2E)-4-hydroxy-3-methylbut-2-enyl diphosphate site. Dimethylallyl diphosphate is bound by residues S317, S318, N319, and S381. Isopentenyl diphosphate-binding residues include S317, S318, N319, and S381.

It belongs to the IspH family. It depends on [4Fe-4S] cluster as a cofactor.

The catalysed reaction is isopentenyl diphosphate + 2 oxidized [2Fe-2S]-[ferredoxin] + H2O = (2E)-4-hydroxy-3-methylbut-2-enyl diphosphate + 2 reduced [2Fe-2S]-[ferredoxin] + 2 H(+). The enzyme catalyses dimethylallyl diphosphate + 2 oxidized [2Fe-2S]-[ferredoxin] + H2O = (2E)-4-hydroxy-3-methylbut-2-enyl diphosphate + 2 reduced [2Fe-2S]-[ferredoxin] + 2 H(+). It participates in isoprenoid biosynthesis; dimethylallyl diphosphate biosynthesis; dimethylallyl diphosphate from (2E)-4-hydroxy-3-methylbutenyl diphosphate: step 1/1. The protein operates within isoprenoid biosynthesis; isopentenyl diphosphate biosynthesis via DXP pathway; isopentenyl diphosphate from 1-deoxy-D-xylulose 5-phosphate: step 6/6. In terms of biological role, catalyzes the conversion of 1-hydroxy-2-methyl-2-(E)-butenyl 4-diphosphate (HMBPP) into a mixture of isopentenyl diphosphate (IPP) and dimethylallyl diphosphate (DMAPP). Acts in the terminal step of the DOXP/MEP pathway for isoprenoid precursor biosynthesis. This chain is 4-hydroxy-3-methylbut-2-enyl diphosphate reductase, found in Prochlorococcus marinus (strain NATL1A).